Here is a 481-residue protein sequence, read N- to C-terminus: Tripartite motif-containing protein 10 (481 aa).

Residues 16-61 (CPICQGTLREPVTIDCGHNFCRACLTRYCEIPGPDLEESPTCPLCK) form an RING-type zinc finger. The B box-type zinc-finger motif lies at 94-135 (GEEDVCQEHGEKIYFFCEDDEMQLCVVCREAGEHATHTMRFL). Zn(2+) contacts are provided by C99, H102, C121, and H127. A coiled-coil region spans residues 142-177 (YREQIHKCLKRLRKEREETQEIQSRENKRMQVLLTQ). A B30.2/SPRY domain is found at 292-481 (REMKMFLEKL…GRGSSFFLSS (190 aa)).

The protein belongs to the TRIM/RBCC family. In terms of assembly, interacts with IFNAR1; this interaction prevents association of IFNAR1 with TYK2.

It localises to the cytoplasm. Its function is as follows. E3 ligase that plays an essential role in the differentiation and survival of terminal erythroid cells. May directly bind to PTEN and promote its ubiquitination, resulting in its proteasomal degradation and activation of hypertrophic signaling. In addition, plays a role in immune response regulation by repressing the phosphorylation of STAT1 and STAT2 in the interferon/JAK/STAT signaling pathway independent of its E3 ligase activity. Mechanistically, interacts with the intracellular domain of IFNAR1 and thereby inhibits the association of TYK2 and IFNAR1. The chain is Tripartite motif-containing protein 10 (TRIM10) from Pan troglodytes (Chimpanzee).